Here is a 150-residue protein sequence, read N- to C-terminus: Ribonuclease H (150 aa).

The RNase H type-1 domain maps to 1-142 (MSDSVEIFTD…ADQLANRGVD (142 aa)). Mg(2+)-binding residues include Asp-10, Glu-48, Asp-70, and Asp-134.

The protein belongs to the RNase H family. As to quaternary structure, monomer. The cofactor is Mg(2+).

It localises to the cytoplasm. The catalysed reaction is Endonucleolytic cleavage to 5'-phosphomonoester.. Its function is as follows. Endonuclease that specifically degrades the RNA of RNA-DNA hybrids. The sequence is that of Ribonuclease H from Pseudomonas fluorescens (strain ATCC BAA-477 / NRRL B-23932 / Pf-5).